The primary structure comprises 650 residues: Solute carrier family 23 member 2 (650 aa).

The segment covering 1–20 (MMGIGKNTTSKSMEAGSSTE) has biased composition (polar residues). The interval 1–21 (MMGIGKNTTSKSMEAGSSTEG) is disordered. At 9–110 (TSKSMEAGSS…LCIFLGLQHY (102 aa)) the chain is on the cytoplasmic side. Serine 70 carries the phosphoserine modification. Phosphothreonine is present on threonine 75. The residue at position 78 (serine 78) is a Phosphoserine. Phosphothreonine is present on threonine 79. At serine 81 the chain carries Phosphoserine. The helical transmembrane segment at 111-131 (LTCFSGTIAVPFLLADAMCVG) threads the bilayer. Over 132-139 (YDQWATSQ) the chain is Extracellular. A helical transmembrane segment spans residues 140-160 (LIGTIFFCVGITTLLQTTFGC). Position 161 (arginine 161) is a topological domain, cytoplasmic. The chain crosses the membrane as a helical span at residues 162-182 (LPLFQASAFAFLAPARAILSL). At 183–218 (DKWKCNTTDVSVANGTAELLHTEHIWYPRIREIQGA) the chain is on the extracellular side. N-linked (GlcNAc...) asparagine glycans are attached at residues asparagine 188 and asparagine 196. A helical membrane pass occupies residues 219 to 239 (IIMSSLIEVVIGLLGLPGALL). Over 240-266 (KYIGPLTITPTVALIGLSGFQAAGERA) the chain is Cytoplasmic. The chain crosses the membrane as a helical span at residues 267-284 (GKHWGIAMLTIFLVLLFS). Residues 285 to 288 (QYAR) are Extracellular-facing. Residues 289-302 (NVKFPLPIYKSKKG) constitute an intramembrane region (helical). Residues 303 to 309 (WTAYKLQ) lie on the Extracellular side of the membrane. Residues 310–330 (LFKMFPIILAILVSWLLCFIF) form a helical membrane-spanning segment. The Cytoplasmic segment spans residues 331–371 (TVTDVFPPDSTKYGFYARTDARQGVLLVAPWFKVPYPFQWG). A helical transmembrane segment spans residues 372-392 (LPTVSAAGVIGMLSAVVASII). Topologically, residues 393 to 417 (ESIGDYYACARLSCAPPPPIHAINR) are extracellular. A helical membrane pass occupies residues 418 to 438 (GIFVEGLSCVLDGIFGTGNGS). The Cytoplasmic segment spans residues 439 to 461 (TSSSPNIGVLGITKVGSRRVIQC). Residues 462-482 (GAALMLALGMIGKFSALFASL) form a helical membrane-spanning segment. Residues 483-485 (PDP) are Extracellular-facing. Residues 486 to 506 (VLGALFCTLFGMITAVGLSNL) traverse the membrane as a helical segment. Over 507–516 (QFIDLNSSRN) the chain is Cytoplasmic. A helical transmembrane segment spans residues 517 to 537 (LFVLGFSIFFGLVLPSYLRQN). Over 538-547 (PLVTGITGID) the chain is Extracellular. Residues 548 to 568 (QVLNVLLTTAMFVGGCVAFIL) traverse the membrane as a helical segment. Topologically, residues 569–650 (DNTIPGTPEE…SSDEDSQATG (82 aa)) are cytoplasmic. Phosphothreonine is present on threonine 649.

The protein belongs to the nucleobase:cation symporter-2 (NCS2) (TC 2.A.40) family. As to quaternary structure, interacts with CLSTN3. In terms of processing, phosphorylated. In terms of tissue distribution, ubiquitous.

Its subcellular location is the cell membrane. The enzyme catalyses L-ascorbate(out) + 2 Na(+)(out) = L-ascorbate(in) + 2 Na(+)(in). Its function is as follows. Sodium/ascorbate cotransporter. Mediates electrogenic uptake of vitamin C, with a stoichiometry of 2 Na(+) for each ascorbate. The sequence is that of Solute carrier family 23 member 2 (SLC23A2) from Homo sapiens (Human).